The following is a 592-amino-acid chain: Ferric-chelate reductase 1 (592 aa).

The helical transmembrane segment at 2 to 22 threads the bilayer; it reads AAPQITLSVLVIALLTCSVTA. A Reelin domain is found at 13-179; the sequence is IALLTCSVTA…FTTPKATTQP (167 aa). N-linked (GlcNAc...) asparagine glycosylation is found at Asn-85, Asn-308, Asn-321, and Asn-353. In terms of domain architecture, DOMON spans 216–331; it reads EPACVFLSFT…ESYYIFFAEG (116 aa). Residues 335–534 enclose the Cytochrome b561 domain; it reads DGRIFRHSQQ…IGTEVILEIH (200 aa). Residues 372–392 form a helical membrane-spanning segment; sequence AHGALMFVAWMTTVSIGVLVA. Heme b-binding residues include His-373 and His-414. The next 5 helical transmembrane spans lie at 415–435, 446–466, 477–499, 515–535, and 569–589; these read RMLMVATSLLTCVAFVLPFVY, HPYLGCTVMTLAVLQPLLATF, VFNWTHWSVGTAARIIAVAAMFL, YAMMGFVVWHIGTEVILEIHA, and VVLAVYICGNVIFLSIFLSAI. Heme b is bound by residues His-446 and His-482.

It belongs to the FRRS1 family. Heme b is required as a cofactor. In terms of tissue distribution, expressed in spleen, liver and kidney with low expression in brain. Localizes in adult brain to the choroid plexus of the fourth, third, and lateral ventricles and to ependymal cells that line the ventricles.

The protein localises to the membrane. Its function is as follows. Ferric-chelate reductases reduce Fe(3+) to Fe(2+) before its transport from the endosome to the cytoplasm. This chain is Ferric-chelate reductase 1 (FRRS1), found in Mus musculus (Mouse).